The primary structure comprises 213 residues: Glutathione S-transferase PARB (213 aa).

Positions 1–82 (MAIKVHGSPM…YIAHVYADNG (82 aa)) constitute a GST N-terminal domain. Residues Ser11, 12–13 (TA), 40–41 (HK), 53–54 (QV), and 66–67 (ES) each bind glutathione. One can recognise a GST C-terminal domain in the interval 89-213 (DPKKMPSMSV…WVKGLEKLQK (125 aa)).

This sequence belongs to the GST superfamily. Phi family.

It catalyses the reaction RX + glutathione = an S-substituted glutathione + a halide anion + H(+). Its function is as follows. Conjugation of reduced glutathione to a wide number of exogenous and endogenous hydrophobic electrophiles. The protein is Glutathione S-transferase PARB of Nicotiana tabacum (Common tobacco).